We begin with the raw amino-acid sequence, 917 residues long: Thiamine biosynthesis bifunctional protein ThiEC (917 aa).

The interval 1 to 243 (MSNEYPYASM…EGWKAVRGDK (243 aa)) is thiamine-phosphate synthase. 4-amino-2-methyl-5-(diphosphooxymethyl)pyrimidine-binding positions include 48 to 52 (QLRAK) and D84. Mg(2+) is bound by residues D85 and D109. S128 is a binding site for 4-amino-2-methyl-5-(diphosphooxymethyl)pyrimidine. Residue 157–159 (STT) coordinates 2-[(2R,5Z)-2-carboxy-4-methylthiazol-5(2H)-ylidene]ethyl phosphate. Position 160 (K160) interacts with 4-amino-2-methyl-5-(diphosphooxymethyl)pyrimidine. Residues G196 and 216 to 217 (VS) contribute to the 2-[(2R,5Z)-2-carboxy-4-methylthiazol-5(2H)-ylidene]ethyl phosphate site. The tract at residues 256–311 (PATDTQAAQEGAAKPGSEATEKKFTNAKDAKDAQKLAKQQRVDIAARGSKQRDKAH) is disordered. The interval 271 to 917 (GSEATEKKFT…GGKLYSTAQE (647 aa)) is phosphomethylpyrimidine synthase. Residues 274–290 (ATEKKFTNAKDAKDAQK) are compositionally biased toward basic and acidic residues. 5-amino-1-(5-phospho-beta-D-ribosyl)imidazole is bound by residues N487, M516, Y545, H581, 601-603 (SRG), 642-645 (DGLR), and E681. H685 contacts Zn(2+). 5-amino-1-(5-phospho-beta-D-ribosyl)imidazole is bound at residue Y708. H749 contributes to the Zn(2+) binding site. Residues C829, C832, and C837 each coordinate [4Fe-4S] cluster.

In the N-terminal section; belongs to the thiamine-phosphate synthase family. It in the C-terminal section; belongs to the ThiC family. Requires [4Fe-4S] cluster as cofactor.

It catalyses the reaction 2-[(2R,5Z)-2-carboxy-4-methylthiazol-5(2H)-ylidene]ethyl phosphate + 4-amino-2-methyl-5-(diphosphooxymethyl)pyrimidine + 2 H(+) = thiamine phosphate + CO2 + diphosphate. It carries out the reaction 2-(2-carboxy-4-methylthiazol-5-yl)ethyl phosphate + 4-amino-2-methyl-5-(diphosphooxymethyl)pyrimidine + 2 H(+) = thiamine phosphate + CO2 + diphosphate. The catalysed reaction is 4-methyl-5-(2-phosphooxyethyl)-thiazole + 4-amino-2-methyl-5-(diphosphooxymethyl)pyrimidine + H(+) = thiamine phosphate + diphosphate. The enzyme catalyses 5-amino-1-(5-phospho-beta-D-ribosyl)imidazole + S-adenosyl-L-methionine = 4-amino-2-methyl-5-(phosphooxymethyl)pyrimidine + CO + 5'-deoxyadenosine + formate + L-methionine + 3 H(+). Its pathway is cofactor biosynthesis; thiamine diphosphate biosynthesis; thiamine phosphate from 4-amino-2-methyl-5-diphosphomethylpyrimidine and 4-methyl-5-(2-phosphoethyl)-thiazole: step 1/1. Functionally, condenses 4-methyl-5-(beta-hydroxyethyl)thiazole monophosphate (THZ-P) and 2-methyl-4-amino-5-hydroxymethyl pyrimidine pyrophosphate (HMP-PP) to form thiamine monophosphate (TMP). Its function is as follows. Catalyzes the synthesis of the hydroxymethylpyrimidine phosphate (HMP-P) moiety of thiamine from aminoimidazole ribotide (AIR) in a radical S-adenosyl-L-methionine (SAM)-dependent reaction. The chain is Thiamine biosynthesis bifunctional protein ThiEC (thiE/thiC) from Bifidobacterium longum (strain NCC 2705).